We begin with the raw amino-acid sequence, 395 residues long: Zinc finger protein 385D (395 aa).

3 consecutive Matrin-type zinc fingers follow at residues I80–A110, L204–A234, and F267–G297. Residues L282–N308 are disordered.

Its subcellular location is the nucleus. In Rattus norvegicus (Rat), this protein is Zinc finger protein 385D (Znf385d).